The sequence spans 417 residues: Phosphoglycerate kinase 1 (417 aa).

Ser2 is subject to N-acetylserine. Phosphoserine is present on residues Ser2 and Ser4. An N6-succinyllysine modification is found at Lys6. An N6-acetyllysine modification is found at Lys11. Residues Val23, Asp24, Phe25, Asn26, Gln38, and Arg39 each contribute to the (2R)-3-phosphoglycerate site. The interval 38 to 43 (QRIKAA) is mitochondrial targeting region exposed following cis-trans isomerization by PIN1 and recognized by the TOM complex for mitochondrial translocation of the protein. Residue Lys48 is modified to N6-acetyllysine; alternate. An N6-succinyllysine; alternate modification is found at Lys48. Residues Ser62, His63, Gly65, and Arg66 each coordinate (2R)-3-phosphoglycerate. Lys75 carries the post-translational modification N6-acetyllysine. The residue at position 76 (Tyr76) is a Phosphotyrosine. N6-acetyllysine occurs at positions 86 and 91. Lys97 is subject to N6-acetyllysine; alternate. Lys97 is subject to N6-(2-hydroxyisobutyryl)lysine; alternate. (2R)-3-phosphoglycerate-binding residues include Leu122 and Arg123. The residue at position 131 (Lys131) is an N6-acetyllysine; alternate. An N6-malonyllysine; alternate modification is found at Lys131. Lys146 bears the N6-acetyllysine mark. (2R)-3-phosphoglycerate-binding residues include His170 and Arg171. Residue Lys191 is modified to N6-succinyllysine. Residue Tyr196 is modified to Phosphotyrosine. Lys199 is subject to N6-acetyllysine. The residue at position 203 (Ser203) is a Phosphoserine. ADP is bound at residue Gly214. Gly214 contacts CDP. Residues Ala215 and Lys216 each contribute to the AMP site. Ala215 is an ATP binding site. Ala215 contributes to the Mg(2+) binding site. An N6-(2-hydroxyisobutyryl)lysine modification is found at Lys216. The Mg(2+) site is built by Ala218 and Asp219. Residue Asp219 coordinates CDP. Lys220 lines the AMP pocket. Lys220 lines the ATP pocket. Lys220 carries the post-translational modification N6-(2-hydroxyisobutyryl)lysine. Gly238 contacts ADP. Gly238 contributes to the CDP binding site. Gly239 contributes to the AMP binding site. Gly239 provides a ligand contact to ATP. N6-acetyllysine occurs at positions 267 and 291. An AMP-binding site is contributed by Gly313. Gly313 is a binding site for ATP. Residue Lys323 is modified to N6-(2-hydroxyisobutyryl)lysine. CDP contacts are provided by Gly338, Val340, and Phe343. Position 343 (Phe343) interacts with ADP. Glu344 is a binding site for AMP. An ATP-binding site is contributed by Glu344. Lys361 is subject to N6-acetyllysine. Residues Asp375 and Thr376 each contribute to the ATP site. Asp375 contributes to the Mg(2+) binding site.

Belongs to the phosphoglycerate kinase family. In terms of assembly, monomer. Interacts with kinase MAPK1/ERK2; the interaction is direct, occurs under hypoxic conditions, and promotes its interaction with PIN1. Interacts with peptidyl-prolyl cis-trans isomerase PIN1; the interaction is direct, occurs under hypoxic conditions, and targets the protein to the mitochondrion by promoting interactions with the TOM complex. Interacts with mitochondrial circRNA mcPGK1 (via its 2nd stem-loop); the interaction is direct and targets the protein to the mitochondrion by promoting interactions with the TOM complex. Interacts with pyruvate dehydrogenase kinase PDK1; the interaction is direct, occurs under hypoxic conditions and leads to PDK1-mediated inhibition of pyruvate dehydrogenase complex activity. The cofactor is Mg(2+). Post-translationally, phosphorylated at Ser-203 by MAPK1/ERK2 under hypoxic conditions, which promotes its mitochondrial targeting. In terms of tissue distribution, testis, lung, brain, skeletal muscle, liver, intestine, and kidney (at protein level).

The protein localises to the cytoplasm. It localises to the cytosol. The protein resides in the mitochondrion matrix. The enzyme catalyses (2R)-3-phosphoglycerate + ATP = (2R)-3-phospho-glyceroyl phosphate + ADP. The catalysed reaction is L-seryl-[protein] + ATP = O-phospho-L-seryl-[protein] + ADP + H(+). The protein operates within carbohydrate degradation; glycolysis; pyruvate from D-glyceraldehyde 3-phosphate: step 2/5. Its function is as follows. Catalyzes one of the two ATP producing reactions in the glycolytic pathway via the reversible conversion of 1,3-diphosphoglycerate to 3-phosphoglycerate. Both L- and D- forms of purine and pyrimidine nucleotides can be used as substrates, but the activity is much lower on pyrimidines. In addition to its role as a glycolytic enzyme, it seems that PGK-1 acts as a polymerase alpha cofactor protein (primer recognition protein). Acts as a protein kinase when localized to the mitochondrion where it phosphorylates pyruvate dehydrogenase kinase PDK1 to inhibit pyruvate dehydrogenase complex activity and suppress the formation of acetyl-coenzyme A from pyruvate, and consequently inhibit oxidative phosphorylation and promote glycolysis. May play a role in sperm motility. The chain is Phosphoglycerate kinase 1 (Pgk1) from Mus musculus (Mouse).